Reading from the N-terminus, the 324-residue chain is E3 ubiquitin-protein ligase SIAH2 (324 aa).

The span at 1-15 (MSRPSSTGPSANKPC) shows a compositional bias: polar residues. Residues 1–42 (MSRPSSTGPSANKPCSKQPPPQPQHTPSPAAPPAAATISAAG) form a disordered region. Ser-6 carries the phosphoserine modification. Ser-16 bears the Phosphoserine; by DYRK2 mark. Positions 17–32 (KQPPPQPQHTPSPAAP) are enriched in pro residues. A Phosphothreonine; by DYRK2 modification is found at Thr-26. Phosphoserine; by DYRK2 and MAPK14 is present on Ser-28. The segment covering 33–42 (PAAATISAAG) has biased composition (low complexity). Residue Ser-68 is modified to Phosphoserine; by DYRK2. The segment at 80–115 (CPVCFDYVLPPILQCQAGHLVCNQCRQKLSCCPTCR) adopts an RING-type zinc-finger fold. The residue at position 119 (Thr-119) is a Phosphothreonine; by DYRK2. The segment at 130–322 (VASAVLFPCK…LGINVTISTC (193 aa)) is SBD. The SIAH-type zinc-finger motif lies at 133 to 193 (AVLFPCKYAT…VMSHLMHAHK (61 aa)). The Zn(2+) site is built by Cys-138, Cys-145, His-157, Cys-161, Cys-168, Cys-175, His-187, and His-192.

This sequence belongs to the SINA (Seven in absentia) family. As to quaternary structure, homodimer. Interacts with UBE2E2. Interacts with PEG3. Interacts with VAV1, without mediating its ubiquitin-mediated degradation. Interacts with CACYBP/SIP. Probable component of some large E3 complex possibly composed of UBE2D1, SIAH2, CACYBP/SIP, SKP1, APC and TBL1X. Interacts with PEG10, which may inhibit its activity. Interacts with EGLN2 and SNCAIP. Interacts with DYRK2. Interacts with NR1D1 and NR1D2. Interacts with DCC. Interacts with AXIN1. In terms of processing, phosphorylated at Ser-28 by MAPK14, which mediates the degradation by the proteasome of EGLN3. Phosphorylated at Ser-28 by DYRK2; this increases the ubiquitin ligase activity and promotes degradation of EGLN3. In terms of tissue distribution, widely expressed at low level.

The protein resides in the cytoplasm. The protein localises to the nucleus. It catalyses the reaction S-ubiquitinyl-[E2 ubiquitin-conjugating enzyme]-L-cysteine + [acceptor protein]-L-lysine = [E2 ubiquitin-conjugating enzyme]-L-cysteine + N(6)-ubiquitinyl-[acceptor protein]-L-lysine.. Its pathway is protein modification; protein ubiquitination. Its activity is regulated as follows. Inhibited by interaction with SNCAIP (isoform 2, but not isoform 1). May be inhibited by interaction with PEG10. Functionally, E3 ubiquitin-protein ligase that mediates ubiquitination and subsequent proteasomal degradation of target proteins. E3 ubiquitin ligases accept ubiquitin from an E2 ubiquitin-conjugating enzyme in the form of a thioester and then directly transfers the ubiquitin to targeted substrates. Mediates E3 ubiquitin ligase activity either through direct binding to substrates or by functioning as the essential RING domain subunit of larger E3 complexes. Triggers the ubiquitin-mediated degradation of many substrates, including proteins involved in transcription regulation (GPS2, POU2AF1, PML, NCOR1), a cell surface receptor (DCC), an antiapoptotic protein (BAG1), and a protein involved in synaptic vesicle function in neurons (SYP). Mediates ubiquitination and proteasomal degradation of DYRK2 in response to hypoxia. It is thereby involved in apoptosis, tumor suppression, cell cycle, transcription and signaling processes. Has some overlapping function with SIAH1. Triggers the ubiquitin-mediated degradation of TRAF2, whereas SIAH1 does not. Promotes monoubiquitination of SNCA. Regulates cellular clock function via ubiquitination of the circadian transcriptional repressors NR1D1 and NR1D2 leading to their proteasomal degradation. Plays an important role in mediating the rhythmic degradation/clearance of NR1D1 and NR1D2 contributing to their circadian profile of protein abundance. Mediates ubiquitination and degradation of EGLN2 and EGLN3 in response to the unfolded protein response (UPR), leading to their degradation and subsequent stabilization of ATF4. Also part of the Wnt signaling pathway in which it mediates the Wnt-induced ubiquitin-mediated proteasomal degradation of AXIN1. This chain is E3 ubiquitin-protein ligase SIAH2 (SIAH2), found in Homo sapiens (Human).